A 364-amino-acid chain; its full sequence is Tubulin alpha-2 chain (364 aa).

5 residues coordinate GTP: glycine 59, threonine 60, threonine 94, asparagine 121, and asparagine 144. The active site involves glutamate 170.

It belongs to the tubulin family. Dimer of alpha and beta chains. A typical microtubule is a hollow water-filled tube with an outer diameter of 25 nm and an inner diameter of 15 nM. Alpha-beta heterodimers associate head-to-tail to form protofilaments running lengthwise along the microtubule wall with the beta-tubulin subunit facing the microtubule plus end conferring a structural polarity. Microtubules usually have 13 protofilaments but different protofilament numbers can be found in some organisms and specialized cells. It depends on Mg(2+) as a cofactor. Post-translationally, undergoes a tyrosination/detyrosination cycle, the cyclic removal and re-addition of a C-terminal tyrosine residue by the enzymes tubulin tyrosine carboxypeptidase (TTCP) and tubulin tyrosine ligase (TTL), respectively.

The protein resides in the cytoplasm. Its subcellular location is the cytoskeleton. It carries out the reaction GTP + H2O = GDP + phosphate + H(+). In terms of biological role, tubulin is the major constituent of microtubules, a cylinder consisting of laterally associated linear protofilaments composed of alpha- and beta-tubulin heterodimers. Microtubules grow by the addition of GTP-tubulin dimers to the microtubule end, where a stabilizing cap forms. Below the cap, tubulin dimers are in GDP-bound state, owing to GTPase activity of alpha-tubulin. This is Tubulin alpha-2 chain (TUBA2) from Anemia phyllitidis (Fern).